The sequence spans 430 residues: von Willebrand factor (430 aa).

N-linked (GlcNAc...) asparagine glycosylation occurs at Asn-6. Cys-9 and Cys-12 are joined by a disulfide. O-linked (GalNAc...) threonine glycosylation is found at Thr-23, Thr-30, and Thr-31. Cys-47 and Cys-233 are disulfide-bonded. In terms of domain architecture, VWFA 1; binding site for platelet glycoprotein Ib spans 52 to 228 (DLVFLLDGSY…DELEQRRDEI (177 aa)). Thr-252 carries O-linked (GalNAc...) threonine glycosylation. Ser-261 carries O-linked (GalNAc...) serine glycosylation. The 158-residue stretch at 273–430 (DVVFVLEASD…ITPIFIQDFE (158 aa)) folds into the VWFA 2 domain. Residues Asn-290 and Asn-349 are each glycosylated (N-linked (GlcNAc...) asparagine).

In terms of assembly, multimeric. Interacts with F8. Post-translationally, N- and O-glycosylated. As to expression, plasma.

The protein localises to the secreted. Its subcellular location is the extracellular space. It localises to the extracellular matrix. Functionally, important in the maintenance of hemostasis, it promotes adhesion of platelets to the sites of vascular injury by forming a molecular bridge between sub-endothelial collagen matrix and platelet-surface receptor complex GPIb-IX-V. Also acts as a chaperone for coagulation factor VIII, delivering it to the site of injury, stabilizing its heterodimeric structure and protecting it from premature clearance from plasma. This Rattus norvegicus (Rat) protein is von Willebrand factor.